Consider the following 251-residue polypeptide: 16S rRNA (guanine(1405)-N(7))-methyltransferase (251 aa).

S-adenosyl-L-methionine-binding positions include Tyr-56, 81–83 (HAS), Arg-87, Ala-111, Asp-131, 157–158 (DV), Phe-173, and Glu-182.

This sequence belongs to the methyltransferase superfamily. Aminoglycoside resistance family.

The catalysed reaction is guanosine(1405) in 16S rRNA + S-adenosyl-L-methionine = N(7)-methylguanosine(1405) in 16S rRNA + S-adenosyl-L-homocysteine. Functionally, specifically methylates the N(7) position of guanine 1405 in 16S rRNA. Confers resistance to various aminoglycosides, including kanamycin, tobramycin, amikacin, arbekacin, gentamicin, sisomicin and isepamicin. In Serratia marcescens, this protein is 16S rRNA (guanine(1405)-N(7))-methyltransferase (rmtB).